An 835-amino-acid polypeptide reads, in one-letter code: Protein translocase subunit SecA (835 aa).

ATP is bound by residues Q85, 103–107 (GEGKT), and D492. Positions 788-807 (VQGEAVHPSSDGEEAKKKPV) are disordered. Zn(2+) contacts are provided by C819, C821, C830, and C831.

It belongs to the SecA family. Monomer and homodimer. Part of the essential Sec protein translocation apparatus which comprises SecA, SecYEG and auxiliary proteins SecDF. Other proteins may also be involved. The cofactor is Zn(2+).

It localises to the cell membrane. Its subcellular location is the cytoplasm. It carries out the reaction ATP + H2O + cellular proteinSide 1 = ADP + phosphate + cellular proteinSide 2.. Functionally, part of the Sec protein translocase complex. Interacts with the SecYEG preprotein conducting channel. Has a central role in coupling the hydrolysis of ATP to the transfer of proteins into and across the cell membrane, serving as an ATP-driven molecular motor driving the stepwise translocation of polypeptide chains across the membrane. This Bacillus cereus (strain ATCC 10987 / NRS 248) protein is Protein translocase subunit SecA.